The following is a 298-amino-acid chain: ATP synthase gamma chain (298 aa).

The protein belongs to the ATPase gamma chain family. In terms of assembly, F-type ATPases have 2 components, CF(1) - the catalytic core - and CF(0) - the membrane proton channel. CF(1) has five subunits: alpha(3), beta(3), gamma(1), delta(1), epsilon(1). CF(0) has three main subunits: a, b and c.

The protein localises to the cell inner membrane. Its function is as follows. Produces ATP from ADP in the presence of a proton gradient across the membrane. The gamma chain is believed to be important in regulating ATPase activity and the flow of protons through the CF(0) complex. This Francisella tularensis subsp. tularensis (strain FSC 198) protein is ATP synthase gamma chain.